The chain runs to 340 residues: MSTSTEKRSKENLPWVEKYRPETLDEVYGQNEVITTVRKFVDEGKLPHLLFYGPPGTGKTSTIVALAREIYGKNYSNMVLELNASDDRGIDVVRNQIKDFASTRQIFSKGFKLIILDEADAMTNAAQNALRRVIERYTKNTRFCVLANYAHKLTPALLSRCTRFRFQPLPQEAIERRIANVLVHEKLKLSPNAEKALIELSNGDMRRVLNVLQSCKATLDNPDEDEISDDVIYECCGAPRPSDLKAVLKSILEDDWGTAHYTLNKVRSAKGLALIDLIEGIVKILEDYELQNEETRVHLLTKLADIEYSISKGGNDQIQGSAVIGAIKASFENETVKANV.

Serine 2 is modified (N-acetylserine). Residues 16–19, arginine 20, tyrosine 28, 53–61, asparagine 148, and arginine 206 contribute to the ATP site; these read VEKY and GPPGTGKTS.

This sequence belongs to the activator 1 small subunits family. As to quaternary structure, replication factor C (RFC) is a heteropentamer of subunits RFC1, RFC2, RFC3, RFC4 and RFC5 and forms a complex with POL30/PCNA in the presence of ATP. Component of the RAD24-RFC complex which consists of RAD14, RFC2, RFC3, RFC4 and RFC5 and associates with the checkpoint clamp DDC1:MEC3:RAD17 complex. Component of the ELG1-RFC complex which consists of ELG1, RFC2, RFC3, RFC4 and RFC5. Component of the CTF18-RFC complex, which consists of CTF18, CTF8, DCC1, RFC2, RFC3, RFC4 and RFC5. RFC3 interacts with ECO1 and POL30/PCNA.

The protein resides in the nucleus. In terms of biological role, component of ATP-dependent clamp loader (RFC and RFC-like) complexes for DNA clamps, such as the POL30/PCNA homotrimer and the checkpoint clamp DDC1:MEC3:RAD17 complex. During a clamp loading circle, the RFC:clamp complex binds to DNA and the recognition of the double-stranded/single-stranded junction stimulates ATP hydrolysis by RFC. The complex presumably provides bipartite ATP sites in which one subunit supplies a catalytic site for hydrolysis of ATP bound to the neighboring subunit. Dissociation of RFC from the clamp leaves the clamp encircling DNA. Component of the replication factor C (RFC or activator 1) complex which loads POL30/PCNA and acts during elongation of primed DNA templates by DNA polymerase delta and epsilon. RFC has an essential but redundant activity in sister chromatid cohesion establishment. Component of the RFC-like complex CTF18-RFC which is required for efficient establishment of chromosome cohesion during S-phase and may load or unload POL30/PCNA. Component of the RFC-like RAD24-RFC complex which loads the checkpoint clamp DDC1:MEC3:RAD17 complex and is involved in DNA repair pathways. Component of the RFC-like ELG1-RFC complex which appears to have a role in DNA replication, replication fork re-start, recombination and repair. RFC3 supplies a catalytic site to the ATP site of RFC4. This chain is Replication factor C subunit 3 (RFC3), found in Saccharomyces cerevisiae (strain ATCC 204508 / S288c) (Baker's yeast).